The chain runs to 1286 residues: DNA-directed RNA polymerase 147 kDa polypeptide (1286 aa).

The protein belongs to the poxviridae DNA-directed RNA polymerase 147 kDa subunit family. As to quaternary structure, the DNA-dependent RNA polymerase used for intermediate and late genes expression consists of eight subunits Rpo30/OPG66, Rpo7/OPG90, Rpo22/OPG103, Rpo147/OPG105, Rpo18/OPG119, Rpo19/OPG131, Rpo132/OPG151 and Rpo35/OPG156. The same holoenzyme, with the addition of the transcription-specificity factor OPG109, is used for early gene expression.

It is found in the virion. It catalyses the reaction RNA(n) + a ribonucleoside 5'-triphosphate = RNA(n+1) + diphosphate. Functionally, part of the DNA-dependent RNA polymerase which catalyzes the transcription of viral DNA into RNA using the four ribonucleoside triphosphates as substrates. Responsible for the transcription of early, intermediate and late genes. DNA-dependent RNA polymerase associates with the early transcription factor (ETF), itself composed of OPG118 and OPG133, thereby allowing the early genes transcription. Late transcription, and probably also intermediate transcription, require newly synthesized RNA polymerase. The polypeptide is DNA-directed RNA polymerase 147 kDa polypeptide (OPG105) (Monkeypox virus).